The following is an 89-amino-acid chain: Gibberellin-regulated protein 10 (89 aa).

The N-terminal stretch at 1–25 is a signal peptide; that stretch reads MKFPAVKVLIISLLITSSLFILSTA.

The protein belongs to the GASA family. In terms of processing, six disulfide bonds may be present. In terms of tissue distribution, expressed in vasculature of rosette leaves and roots, cotyledon and root tips and developing seeds.

It is found in the secreted. Its function is as follows. Gibberellin-regulated protein that may function in hormonal controlled steps of development such as seed germination, flowering and seed maturation. This Arabidopsis thaliana (Mouse-ear cress) protein is Gibberellin-regulated protein 10 (GASA10).